Consider the following 356-residue polypeptide: Rhomboid-related protein 1 (356 aa).

The next 7 membrane-spanning stretches (helical) occupy residues 107-129 (WCPPPIFMLLITIIQVGIFFFYW), 172-194 (YMFLHAGLNHLLGNVIIQLLVGI), 201-223 (KIWRIGPIYLLAVTSGSLLQYAI), 227-249 (SLLVGASAGVYALIFAHVANVIL), 256-275 (LRWIRVLVLFVFIFLDFGGA), 290-312 (HLAHIAGAVTGLFFGYVVLYNVV), and 319-341 (IIRYVCLFLYSAFFATTIIFVIV). The active-site Nucleophile is the S233. Residue H293 is part of the active site.

This sequence belongs to the peptidase S54 family.

The protein localises to the membrane. The catalysed reaction is Cleaves type-1 transmembrane domains using a catalytic dyad composed of serine and histidine that are contributed by different transmembrane domains.. Serine protease which activates lin-3 isoform a in the proximal vulva precursor cells (VPC) during vulva development to transmit the inductive anchor cell signal to the distal VPCs. The protein is Rhomboid-related protein 1 of Caenorhabditis elegans.